Reading from the N-terminus, the 134-residue chain is Bet1-like protein At1g29060 (134 aa).

A compositionally biased stretch (gly residues) spans 1-12; sequence MASNRGAGGSLY. The tract at residues 1-31 is disordered; that stretch reads MASNRGAGGSLYGGADPYRSREGLSTRNASG. Topologically, residues 1-110 are cytoplasmic; it reads MASNRGAGGS…LSIIRSGNNH (110 aa). Positions 40–102 constitute a t-SNARE coiled-coil homology domain; it reads DPMHSDLDDE…KNNIRKLNLS (63 aa). Residues 111–131 form a helical; Anchor for type IV membrane protein membrane-spanning segment; that stretch reads IMHVVLFALLLFFILYMWSKM. Residues 132 to 134 lie on the Vesicular side of the membrane; sequence FKR.

This sequence belongs to the BET1 family.

It is found in the golgi apparatus membrane. It localises to the endoplasmic reticulum membrane. Functionally, required for vesicular transport from the ER to the Golgi complex. Functions as a SNARE associated with ER-derived vesicles. This chain is Bet1-like protein At1g29060, found in Arabidopsis thaliana (Mouse-ear cress).